Here is a 551-residue protein sequence, read N- to C-terminus: HTH-type transcriptional regulator SgrR (551 aa).

The 116-residue stretch at 1–116 folds into the HTH marR-type domain; it reads MPSARLQQQF…LVSHLGRSFR (116 aa). The segment at residues 26–49 is a DNA-binding region (H-T-H motif); that stretch reads LNELAALLSCSRRHMRTLLNTMQD. Residues 163 to 492 are solute-binding; that stretch reads ELEADIAHHW…IDWQADAARW (330 aa).

In terms of biological role, activates the small RNA gene sgrS under glucose-phosphate stress conditions as well as yfdZ. Represses its own transcription under both stress and non-stress conditions. Might act as a sensor of the intracellular accumulation of phosphoglucose by binding these molecules in its C-terminal solute-binding domain. In Shigella boydii serotype 4 (strain Sb227), this protein is HTH-type transcriptional regulator SgrR.